The primary structure comprises 31 residues: Cyclotide vico-B (31 aa).

The cyclopeptide (Gly-Asn) cross-link spans 1 to 31 (GSIPCAESCVYIPCITGIAGCSCKNKVCYYN). Cystine bridges form between Cys-5/Cys-21, Cys-9/Cys-23, and Cys-14/Cys-28.

It belongs to the cyclotide family. Bracelet subfamily. Post-translationally, this is a cyclic peptide.

Its function is as follows. Probably participates in a plant defense mechanism. The protein is Cyclotide vico-B of Viola cotyledon (Violeta).